The following is a 37-amino-acid chain: Large ribosomal subunit protein bL36 (37 aa).

This sequence belongs to the bacterial ribosomal protein bL36 family.

The protein is Large ribosomal subunit protein bL36 of Listeria innocua serovar 6a (strain ATCC BAA-680 / CLIP 11262).